We begin with the raw amino-acid sequence, 99 residues long: Small ribosomal subunit protein uS17 (99 aa).

Belongs to the universal ribosomal protein uS17 family. As to quaternary structure, part of the 30S ribosomal subunit.

In terms of biological role, one of the primary rRNA binding proteins, it binds specifically to the 5'-end of 16S ribosomal RNA. The polypeptide is Small ribosomal subunit protein uS17 (Thermosipho africanus (strain TCF52B)).